Consider the following 341-residue polypeptide: L-threonine 3-dehydrogenase (341 aa).

C38 is a binding site for Zn(2+). Residues T40 and H43 each act as charge relay system in the active site. Zn(2+)-binding residues include H63, E64, C93, C96, C99, and C107. NAD(+)-binding positions include I175, D195, R200, 262–264 (LGI), and 286–287 (IY).

The protein belongs to the zinc-containing alcohol dehydrogenase family. As to quaternary structure, homotetramer. Zn(2+) serves as cofactor.

Its subcellular location is the cytoplasm. It carries out the reaction L-threonine + NAD(+) = (2S)-2-amino-3-oxobutanoate + NADH + H(+). It participates in amino-acid degradation; L-threonine degradation via oxydo-reductase pathway; glycine from L-threonine: step 1/2. Its function is as follows. Catalyzes the NAD(+)-dependent oxidation of L-threonine to 2-amino-3-ketobutyrate. This chain is L-threonine 3-dehydrogenase, found in Klebsiella pneumoniae subsp. pneumoniae (strain ATCC 700721 / MGH 78578).